The sequence spans 417 residues: UDP-N-acetylglucosamine 1-carboxyvinyltransferase 2 (417 aa).

A phosphoenolpyruvate-binding site is contributed by 22-23 (KN). Position 94 (Arg-94) interacts with UDP-N-acetyl-alpha-D-glucosamine. Cys-118 functions as the Proton donor in the catalytic mechanism. Cys-118 is subject to 2-(S-cysteinyl)pyruvic acid O-phosphothioketal. UDP-N-acetyl-alpha-D-glucosamine-binding positions include 123–127 (RPIDL), Asp-306, and Ile-328.

This sequence belongs to the EPSP synthase family. MurA subfamily.

The protein resides in the cytoplasm. It carries out the reaction phosphoenolpyruvate + UDP-N-acetyl-alpha-D-glucosamine = UDP-N-acetyl-3-O-(1-carboxyvinyl)-alpha-D-glucosamine + phosphate. The protein operates within cell wall biogenesis; peptidoglycan biosynthesis. Functionally, cell wall formation. Adds enolpyruvyl to UDP-N-acetylglucosamine. This is UDP-N-acetylglucosamine 1-carboxyvinyltransferase 2 from Clostridium tetani (strain Massachusetts / E88).